A 498-amino-acid chain; its full sequence is ATP synthase subunit beta, chloroplastic (498 aa).

172 to 179 contacts ATP; the sequence is GGAGVGKT.

Belongs to the ATPase alpha/beta chains family. As to quaternary structure, F-type ATPases have 2 components, CF(1) - the catalytic core - and CF(0) - the membrane proton channel. CF(1) has five subunits: alpha(3), beta(3), gamma(1), delta(1), epsilon(1). CF(0) has four main subunits: a(1), b(1), b'(1) and c(9-12).

It localises to the plastid. The protein resides in the chloroplast thylakoid membrane. The catalysed reaction is ATP + H2O + 4 H(+)(in) = ADP + phosphate + 5 H(+)(out). In terms of biological role, produces ATP from ADP in the presence of a proton gradient across the membrane. The catalytic sites are hosted primarily by the beta subunits. The polypeptide is ATP synthase subunit beta, chloroplastic (Eucalyptus globulus subsp. globulus (Tasmanian blue gum)).